Reading from the N-terminus, the 313-residue chain is Transcription initiation factor IIB 2 (313 aa).

The TFIIB-type zinc-finger motif lies at 13–44; the sequence is APKRCPECHSEHLIRDYEHGELICADCGAVIE. Zn(2+) contacts are provided by C17, C20, C36, and C39. A run of 2 repeats spans residues 130-213 and 224-305.

This sequence belongs to the TFIIB family.

Functionally, stabilizes TBP binding to an archaeal box-A promoter. Also responsible for recruiting RNA polymerase II to the pre-initiation complex (DNA-TBP-TFIIB). The protein is Transcription initiation factor IIB 2 of Thermoplasma volcanium (strain ATCC 51530 / DSM 4299 / JCM 9571 / NBRC 15438 / GSS1).